We begin with the raw amino-acid sequence, 122 residues long: Modulator protein MzrA (122 aa).

Residues 1–10 (MKILTRIPRR) lie on the Cytoplasmic side of the membrane. Residues 11–31 (LLPWLLGGALALVAVSFAPAL) traverse the membrane as a helical segment. Residues 32 to 122 (LSHETVVQIR…NQDANRSIYS (91 aa)) are Periplasmic-facing.

The protein belongs to the MzrA family. Interacts with EnvZ.

Its subcellular location is the cell inner membrane. Functionally, modulates the activity of the EnvZ/OmpR two-component regulatory system, probably by directly modulating EnvZ enzymatic activity and increasing stability of phosphorylated OmpR. This Pantoea sp. (strain At-9b) protein is Modulator protein MzrA.